Here is a 315-residue protein sequence, read N- to C-terminus: Lamassu protein LmuA (315 aa).

Component of antiviral defense system Lamassu type I, composed of LmuA and LmuB. Expression of Lamassu type I in B.subtilis (strain BEST7003) confers resistance to phages phi3T, SpBeta and SPR. In Bacillus sp. (strain NCIM 5461 / CCTCC AB 2011126 / NIO-1130), this protein is Lamassu protein LmuA.